A 331-amino-acid polypeptide reads, in one-letter code: Protein RecA (331 aa).

An ATP-binding site is contributed by 67 to 74 (GPESSGKT).

The protein belongs to the RecA family.

It is found in the cytoplasm. Its function is as follows. Can catalyze the hydrolysis of ATP in the presence of single-stranded DNA, the ATP-dependent uptake of single-stranded DNA by duplex DNA, and the ATP-dependent hybridization of homologous single-stranded DNAs. It interacts with LexA causing its activation and leading to its autocatalytic cleavage. This Wigglesworthia glossinidia brevipalpis protein is Protein RecA.